A 376-amino-acid polypeptide reads, in one-letter code: UDP-N-acetylglucosamine--N-acetylmuramyl-(pentapeptide) pyrophosphoryl-undecaprenol N-acetylglucosamine transferase (376 aa).

UDP-N-acetyl-alpha-D-glucosamine-binding positions include 11–13 (TGG), Asn117, Arg160, Ser208, and Gln310.

The protein belongs to the glycosyltransferase 28 family. MurG subfamily.

The protein localises to the cell inner membrane. The catalysed reaction is di-trans,octa-cis-undecaprenyl diphospho-N-acetyl-alpha-D-muramoyl-L-alanyl-D-glutamyl-meso-2,6-diaminopimeloyl-D-alanyl-D-alanine + UDP-N-acetyl-alpha-D-glucosamine = di-trans,octa-cis-undecaprenyl diphospho-[N-acetyl-alpha-D-glucosaminyl-(1-&gt;4)]-N-acetyl-alpha-D-muramoyl-L-alanyl-D-glutamyl-meso-2,6-diaminopimeloyl-D-alanyl-D-alanine + UDP + H(+). It functions in the pathway cell wall biogenesis; peptidoglycan biosynthesis. Its function is as follows. Cell wall formation. Catalyzes the transfer of a GlcNAc subunit on undecaprenyl-pyrophosphoryl-MurNAc-pentapeptide (lipid intermediate I) to form undecaprenyl-pyrophosphoryl-MurNAc-(pentapeptide)GlcNAc (lipid intermediate II). The protein is UDP-N-acetylglucosamine--N-acetylmuramyl-(pentapeptide) pyrophosphoryl-undecaprenol N-acetylglucosamine transferase of Rickettsia peacockii (strain Rustic).